The following is a 354-amino-acid chain: Glyceraldehyde-3-phosphate dehydrogenase (354 aa).

NAD(+)-binding positions include 11–12 (TI) and G108. 137–139 (SCN) is a D-glyceraldehyde 3-phosphate binding site. The active-site Nucleophile is C138. R166 serves as a coordination point for NAD(+). 192-193 (HG) provides a ligand contact to D-glyceraldehyde 3-phosphate. Q299 is a binding site for NAD(+).

This sequence belongs to the glyceraldehyde-3-phosphate dehydrogenase family. As to quaternary structure, homotetramer.

The protein localises to the cytoplasm. The enzyme catalyses D-glyceraldehyde 3-phosphate + phosphate + NADP(+) = (2R)-3-phospho-glyceroyl phosphate + NADPH + H(+). It catalyses the reaction D-glyceraldehyde 3-phosphate + phosphate + NAD(+) = (2R)-3-phospho-glyceroyl phosphate + NADH + H(+). The protein operates within carbohydrate degradation; glycolysis; pyruvate from D-glyceraldehyde 3-phosphate: step 1/5. The protein is Glyceraldehyde-3-phosphate dehydrogenase of Haloarcula marismortui (strain ATCC 43049 / DSM 3752 / JCM 8966 / VKM B-1809) (Halobacterium marismortui).